Consider the following 366-residue polypeptide: GTP cyclohydrolase 1 type 2 homolog (366 aa).

His-64, His-65, Asp-102, His-326, and Glu-329 together coordinate a divalent metal cation.

This sequence belongs to the GTP cyclohydrolase I type 2/NIF3 family. As to quaternary structure, homohexamer.

The polypeptide is GTP cyclohydrolase 1 type 2 homolog (Staphylococcus epidermidis (strain ATCC 12228 / FDA PCI 1200)).